Reading from the N-terminus, the 161-residue chain is RNA pyrophosphohydrolase (161 aa).

Residues 6 to 149 (GFRPNVGIIL…KRDVYRKAMV (144 aa)) form the Nudix hydrolase domain. Residues 38–59 (GGIQFGETPEQALFRELREEIG) carry the Nudix box motif.

Belongs to the Nudix hydrolase family. RppH subfamily. A divalent metal cation serves as cofactor.

In terms of biological role, accelerates the degradation of transcripts by removing pyrophosphate from the 5'-end of triphosphorylated RNA, leading to a more labile monophosphorylated state that can stimulate subsequent ribonuclease cleavage. The protein is RNA pyrophosphohydrolase of Acinetobacter baumannii (strain AB307-0294).